We begin with the raw amino-acid sequence, 350 residues long: Homoserine O-succinyltransferase (350 aa).

Cys-146 serves as the catalytic Acyl-thioester intermediate. Residues Lys-167 and Ser-196 each contribute to the substrate site. His-239 acts as the Proton acceptor in catalysis. Residue Glu-241 is part of the active site. Arg-253 provides a ligand contact to substrate.

This sequence belongs to the MetA family.

It is found in the cytoplasm. It carries out the reaction L-homoserine + succinyl-CoA = O-succinyl-L-homoserine + CoA. Its pathway is amino-acid biosynthesis; L-methionine biosynthesis via de novo pathway; O-succinyl-L-homoserine from L-homoserine: step 1/1. Transfers a succinyl group from succinyl-CoA to L-homoserine, forming succinyl-L-homoserine. This is Homoserine O-succinyltransferase from Cardiobacterium hominis (strain ATCC 15826 / DSM 8339 / NCTC 10426 / 6573).